Reading from the N-terminus, the 89-residue chain is Small ribosomal subunit protein uS15 (89 aa).

Belongs to the universal ribosomal protein uS15 family. As to quaternary structure, part of the 30S ribosomal subunit. Forms a bridge to the 50S subunit in the 70S ribosome, contacting the 23S rRNA.

Functionally, one of the primary rRNA binding proteins, it binds directly to 16S rRNA where it helps nucleate assembly of the platform of the 30S subunit by binding and bridging several RNA helices of the 16S rRNA. Forms an intersubunit bridge (bridge B4) with the 23S rRNA of the 50S subunit in the ribosome. In Hyphomonas neptunium (strain ATCC 15444), this protein is Small ribosomal subunit protein uS15.